The sequence spans 144 residues: D-aminoacyl-tRNA deacylase (144 aa).

Residues 136-137 carry the Gly-cisPro motif, important for rejection of L-amino acids motif; it reads GP.

It belongs to the DTD family. Homodimer.

It localises to the cytoplasm. The enzyme catalyses glycyl-tRNA(Ala) + H2O = tRNA(Ala) + glycine + H(+). The catalysed reaction is a D-aminoacyl-tRNA + H2O = a tRNA + a D-alpha-amino acid + H(+). In terms of biological role, an aminoacyl-tRNA editing enzyme that deacylates mischarged D-aminoacyl-tRNAs. Also deacylates mischarged glycyl-tRNA(Ala), protecting cells against glycine mischarging by AlaRS. Acts via tRNA-based rather than protein-based catalysis; rejects L-amino acids rather than detecting D-amino acids in the active site. By recycling D-aminoacyl-tRNA to D-amino acids and free tRNA molecules, this enzyme counteracts the toxicity associated with the formation of D-aminoacyl-tRNA entities in vivo and helps enforce protein L-homochirality. The chain is D-aminoacyl-tRNA deacylase from Mannheimia succiniciproducens (strain KCTC 0769BP / MBEL55E).